The primary structure comprises 2052 residues: MDNFFPEGTRVWLRENGQHFPSTVNSCAEGVVVFQTDYGQVFTYKQSTITHQKVMPMQPTDEEGVDDMATLTELHGGAIMHNLYQRYKRNQIYTYIGSIIASVNPYKTITGLYSRDAVDRYSRCHLGELPPHVFAIANECYRCLWKRHDNQCVLISGESGAGKTESTKLILKFLSAISQQSVDLSSKEKTSSVEQAILESSPIMEAFGNAKTVYNNNSSRFGKFVQLNIGQKGNIQGGRIVDYLLEKNRVVRQNPGERNYHIFYALLAGLGHEEREEFYLSVPENYHYLNQSGCVTDRTISDQESFREVIMAMEVMQFSKEEVREVLRLLAGILHLGNIEFITAGGAQVSFKTALGRSAELLGLDPAQLTDALTQRSMFLRGEEILTPLNVQQAADSRDSLAMALYARCFEWVIKKINSRIKGKDDFKSIGILDIFGFENFEVNHFEQFNINYANEKLQEYFNKHIFSLEQLEYSREGLVWEDIDWIDNGECLDLIEKKLGLLALINEESHFPQATDSTLLEKLHNQHANNHFYVKPRVAVNNFGVKHYAGEVQYDVRGILEKNRDTFRDDLLNLLRESRFDFIYDLFEHVSSRNNQDTLKCGSKHRRPTVSSQFKDSLHSLMATLSASNPFFVRCIKPNMQKMPDQFDQAVVVNQLRYSGMLETVRIRKAGYAVRRPFQDFYKRYKVLMRNVALPEDIRGKCTALLQLYDASNSEWQLGKTKVFLRESLEQKLEKRQEEEVTRAAMVIRAHVLGYLARKQYKKVLDCVVIIQKNYRAFLLRRRFLHLKKAAVVFQKQLRGQIARRVYRQLLAEKRAEEEKRKREEEEKRKREEEERERERERREAELRAQQEEAARKQRELEALQQESQRAAELSRELEKQKENKQVEEILRLEKEIEDLQRMKERQELSLTEASLQKLQQLRDEELRRLEDEACRAAQEFLESLNFDEIDECVRNIERSLSVGSGCTGEQGAGAEKPSFNFSQPYPEEEEVDEGFEADDDAFKDSPNPSEHGHSDQRTSGIRTSDESSEEDPYMNDTVVPTSPSADSTVLLAPSEHDSSAGEPTYCLPQTPGALPAPEGDYDYDQDDYEDGAITSGSSVTFSNSCSSQWSPDYRCSVGTYNSSGAYRFSSEGAQSSFEDSEEDFDSRFDTDDELSYRRDSVYSCVTLPYFHSFLYMKGGLMNSWKRRWCVLKDETFLWFRSKQEALKQGWLHKKGGGSSTLSRRNWKKRWFVLRQAKLMYFENDSEEKLKGTVEVRAAKEIIDNTSKENGIDIIMADRTFHLIAESPEDASQWFSVLSQVHASTDQEIREMHDEQANPQNAVGTLDVGLIDSVCASDSPDRPNSFVIITANRVLHCNADTPEEMHHWITLLQRSKGDTRVEGQEFIVRGWLHKEVKNSPKMSSLKLKKRWFVLTHNSLDYYKSSEKNALKLGTLVLNSLCSVVPPDEKIFKETGYWNVTVYGRKHCYRLYTKLLNEATRWSSAIQNVTDTKAPIDTPTQQLIQDIKENCLNSDVVEQIYKRNPILRHTHHPLHSPLLPLPYGDINLNLLKDKGYTTLQDEAIKIFNSLQQLESMSDPIPIIQGILQTGHDLRPLRDELYCQLIKQTNKVPHPGSVGNLCSWQILTCLSCTFLPSRGILKYLKFHLRRIREQFPGTEMEKYALFIYESLKKTKCREFVPSRDEIEALIHRQEMTSTVHCHGGGSCKITVNSHTTAGEVVEKLIRGLAMEDSRNMFALFEYNGHVDKAIESRTIVADVLAKFEKLAATSEVGEQPWKFYFKLYCFLDTDNVPKDSVEFAFMFEQAHEAVIHGHYPAPEENLQVLAALRLQYLQGDYAPHAPVPPLEEVYSLQRLKARISQSTKSFTPGERLEKRRTSFLEGTLRRSFRTGSAIRQKAEEEQMVDMWVKEEVCSARASILDKWKKFQGMSQEQAMAKYMALIKEWPGYGSTLFDVECKEGGFPQDLWLGVSADAVSVYKRGEGRPLEVFQYEHILSFGAPLANTYKIVVDERELLFETSEVVDVAKLMKAYISMIVKKRYSTSRSVSSQGSSR.

N-acetylmethionine is present on methionine 1. The Myosin motor domain occupies 63–739; that stretch reads EGVDDMATLT…LEQKLEKRQE (677 aa). ATP-binding positions include asparagine 104, tyrosine 113, 160-165, and asparagine 215; that span reads GAGKTE. An actin-binding region spans residues 619–641; the sequence is LHSLMATLSASNPFFVRCIKPNM. 3 consecutive IQ domains span residues 742 to 763, 764 to 787, and 788 to 817; these read VTRAAMVIRAHVLGYLARKQYK, KVLDCVVIIQKNYRAFLLRRRFLH, and LKKAAVVFQKQLRGQIARRVYRQLLAEKRA. The SAH stretch occupies residues 814-884; sequence EKRAEEEKRK…LSRELEKQKE (71 aa). The segment at 819–843 is disordered; that stretch reads EEKRKREEEEKRKREEEERERERER. Positions 885–935 form a coiled coil; it reads NKQVEEILRLEKEIEDLQRMKERQELSLTEASLQKLQQLRDEELRRLEDEA. Residues serine 963 and serine 966 each carry the phosphoserine modification. The interval 964-1093 is disordered; sequence VGSGCTGEQG…DYDQDDYEDG (130 aa). Over residues 988 to 1003 the composition is skewed to acidic residues; that stretch reads PEEEEVDEGFEADDDA. Residues 1040–1049 show a composition bias toward polar residues; that stretch reads VVPTSPSADS. Over residues 1081–1092 the composition is skewed to acidic residues; the sequence is GDYDYDQDDYED. Phosphothreonine is present on threonine 1152. 2 PH domains span residues 1206–1304 and 1386–1491; these read EALK…QVHA and EFIV…NVTD. The MyTH4 domain maps to 1541–1689; that stretch reads LPYGDINLNL…PSRDEIEALI (149 aa). The FERM domain maps to 1694 to 2038; the sequence is MTSTVHCHGG…AYISMIVKKR (345 aa).

Belongs to the TRAFAC class myosin-kinesin ATPase superfamily. Myosin family. In terms of assembly, monomer, when in an inactive conformation in the cytosol. Homodimer in its active, membrane-bound conformation; antiparallel coiled coil-mediated dimer formation. Interacts with ECPAS. Interacts with NEO 1. Interacts with VASP. Interacts with DCC and ITGB5; the presence of DCC inhibits ITGB5 binding. Interacts with tubulin; ITGB5 or DCC binding inhibits tubulin binding. Interacts strongly with CALM3 and weakly with CALM, the CALM3 interaction is essential for function in filopodial extension and motility. Interacts with ITGB1, ITGB3 and ITGB5. Detected in kidney, testis, liver, kidney, cerebellum and brain cortex (at protein level).

It localises to the cytoplasm. The protein resides in the cytosol. Its subcellular location is the cell projection. It is found in the lamellipodium. The protein localises to the ruffle. It localises to the cytoskeleton. The protein resides in the filopodium tip. Its subcellular location is the cell cortex. It is found in the filopodium membrane. Myosins are actin-based motor molecules with ATPase activity. Unconventional myosins serve in intracellular movements. MYO10 binds to actin filaments and actin bundles and functions as a plus end-directed motor. Moves with higher velocity and takes larger steps on actin bundles than on single actin filaments. The tail domain binds to membranous compartments containing phosphatidylinositol 3,4,5-trisphosphate, which are then moved relative to actin filaments. Regulates cell shape, cell spreading and cell adhesion. Stimulates the formation and elongation of filopodia. In hippocampal neurons it induces the formation of dendritic filopodia by trafficking the actin-remodeling protein VASP to the tips of filopodia, where it promotes actin elongation. Plays a role in formation of the podosome belt in osteoclasts. The protein is Unconventional myosin-X (MYO10) of Bos taurus (Bovine).